The sequence spans 118 residues: Large ribosomal subunit protein uL24 (118 aa).

It belongs to the universal ribosomal protein uL24 family. As to quaternary structure, part of the 50S ribosomal subunit.

Functionally, one of two assembly initiator proteins, it binds directly to the 5'-end of the 23S rRNA, where it nucleates assembly of the 50S subunit. Its function is as follows. One of the proteins that surrounds the polypeptide exit tunnel on the outside of the subunit. This Prochlorococcus marinus (strain MIT 9303) protein is Large ribosomal subunit protein uL24.